A 109-amino-acid chain; its full sequence is Small ribosomal subunit protein uS17 (109 aa).

It belongs to the universal ribosomal protein uS17 family. In terms of assembly, part of the 30S ribosomal subunit.

Its function is as follows. One of the primary rRNA binding proteins, it binds specifically to the 5'-end of 16S ribosomal RNA. The sequence is that of Small ribosomal subunit protein uS17 from Thermoplasma volcanium (strain ATCC 51530 / DSM 4299 / JCM 9571 / NBRC 15438 / GSS1).